The following is a 547-amino-acid chain: DNA ligase (547 aa).

E244 lines the ATP pocket. K246 functions as the N6-AMP-lysine intermediate in the catalytic mechanism. ATP contacts are provided by R251, R266, E295, F334, R405, and K411.

Belongs to the ATP-dependent DNA ligase family. Mg(2+) is required as a cofactor.

The enzyme catalyses ATP + (deoxyribonucleotide)n-3'-hydroxyl + 5'-phospho-(deoxyribonucleotide)m = (deoxyribonucleotide)n+m + AMP + diphosphate.. Functionally, DNA ligase that seals nicks in double-stranded DNA during DNA replication, DNA recombination and DNA repair. The protein is DNA ligase of Methanospirillum hungatei JF-1 (strain ATCC 27890 / DSM 864 / NBRC 100397 / JF-1).